Reading from the N-terminus, the 392-residue chain is Telomere-binding protein subunit beta (392 aa).

A disordered region spans residues 234–392; sequence QQVESVQVQP…ASKASKRSKK (159 aa). Positions 247–256 are enriched in basic residues; the sequence is GGAKGKKKAA. A compositionally biased stretch (low complexity) spans 257–268; that stretch reads TKSATKKTVAAK. Positions 269-284 are enriched in basic and acidic residues; that stretch reads KTAESADVRKSVDKIV. Residues 328–343 show a composition bias toward polar residues; that stretch reads SPSGKKSTKTTDQMTM. Over residues 374–384 the composition is skewed to low complexity; it reads GKASATSGKAS.

In terms of assembly, heterodimer of an alpha and a beta subunit.

The protein localises to the nucleus. Its subcellular location is the chromosome. The protein resides in the telomere. Functionally, may function as protective capping of the single-stranded telomeric overhang. May also participate in telomere length regulation during DNA replication. In Stylonychia mytilus (Ciliate), this protein is Telomere-binding protein subunit beta (STY43).